The following is a 279-amino-acid chain: Prephenate dehydratase (279 aa).

Residues 2–178 enclose the Prephenate dehydratase domain; that stretch reads KIAYLGPRGS…NSTRFWLLGK (177 aa). Positions 194–272 constitute an ACT domain; it reads LALTLPDNLP…VNVRLLGNYS (79 aa).

The enzyme catalyses prephenate + H(+) = 3-phenylpyruvate + CO2 + H2O. It functions in the pathway amino-acid biosynthesis; L-phenylalanine biosynthesis; phenylpyruvate from prephenate: step 1/1. The chain is Prephenate dehydratase (pheA) from Lactococcus lactis subsp. cremoris (strain MG1363).